The following is a 472-amino-acid chain: L-fuculokinase (472 aa).

It belongs to the FGGY kinase family. The cofactor is a divalent metal cation.

The enzyme catalyses L-fuculose + ATP = L-fuculose 1-phosphate + ADP + H(+). It participates in carbohydrate degradation; L-fucose degradation; L-lactaldehyde and glycerone phosphate from L-fucose: step 2/3. Functionally, catalyzes the phosphorylation of L-fuculose. Can also phosphorylate, with lower efficiency, D-ribulose, D-xylulose and D-fructose. The sequence is that of L-fuculokinase from Escherichia coli (strain K12).